The chain runs to 165 residues: Adenosine 5'-monophosphoramidase HINT3 (165 aa).

The tract at residues 1–23 (MAEKQAGLVGEPDPEGSSPGTSE) is disordered. An N-acetylalanine modification is found at alanine 2. In terms of domain architecture, HIT spans 32-143 (VFCRVAAGQE…PVKEFGFLSK (112 aa)). Residues 59-60 (DI) and 128-130 (HLH) contribute to the AMP site. Positions 126 to 130 (HLHLH) match the Histidine triad motif motif. Histidine 128 (tele-AMP-histidine intermediate) is an active-site residue.

It belongs to the HINT family. As to quaternary structure, forms dimers to octamers and even larger oligomer. Interacts with CALM1.

Its subcellular location is the cytoplasm. The protein localises to the nucleus. It carries out the reaction adenosine 5'-phosphoramidate + H2O = AMP + NH4(+). Its function is as follows. Exhibits adenosine 5'-monophosphoramidase activity, hydrolyzing purine nucleotide phosphoramidates with a single phosphate group such as adenosine 5'monophosphoramidate (AMP-NH2) to yield AMP and NH2. Hydrolyzes lysyl-AMP (AMP-N-epsilon-(N-alpha-acetyl lysine methyl ester)) generated by lysine tRNA ligase. This chain is Adenosine 5'-monophosphoramidase HINT3 (Hint3), found in Mus musculus (Mouse).